The sequence spans 240 residues: Orotidine 5'-phosphate decarboxylase (240 aa).

Residues D19, K41, 68–77, T123, R184, Q193, G213, and R214 contribute to the substrate site; that span reads DYKYYDIEET. Catalysis depends on K70, which acts as the Proton donor.

The protein belongs to the OMP decarboxylase family. Type 1 subfamily. In terms of assembly, homodimer.

The enzyme catalyses orotidine 5'-phosphate + H(+) = UMP + CO2. The protein operates within pyrimidine metabolism; UMP biosynthesis via de novo pathway; UMP from orotate: step 2/2. Its function is as follows. Catalyzes the decarboxylation of orotidine 5'-monophosphate (OMP) to uridine 5'-monophosphate (UMP). This Nitrobacter winogradskyi (strain ATCC 25391 / DSM 10237 / CIP 104748 / NCIMB 11846 / Nb-255) protein is Orotidine 5'-phosphate decarboxylase.